The primary structure comprises 1025 residues: Presequence protease, mitochondrial (1025 aa).

Histidine 90 contributes to the Zn(2+) binding site. Glutamate 93 functions as the Proton acceptor in the catalytic mechanism. Histidine 94 serves as a coordination point for Zn(2+). Glutamate 166 is an active-site residue. Position 197 (glutamate 197) interacts with Zn(2+).

Belongs to the peptidase M16 family. PreP subfamily. As to quaternary structure, monomer and homodimer; homodimerization is induced by binding of the substrate. The cofactor is Zn(2+).

The protein resides in the mitochondrion intermembrane space. Its subcellular location is the mitochondrion matrix. Its function is as follows. Degrades mitochondrial transit peptides after their cleavage in the intermembrane space or in the matrix, and presequence peptides; clearance of these peptides is required to keep the presequence processing machinery running. Preferentially cleaves the N-terminal side of paired basic amino acid residues. Also degrades other unstructured peptides. May function as an ATP-dependent peptidase as opposed to a metalloendopeptidase. This Aspergillus oryzae (strain ATCC 42149 / RIB 40) (Yellow koji mold) protein is Presequence protease, mitochondrial (cym1).